A 298-amino-acid polypeptide reads, in one-letter code: Tyrosine recombinase XerC (298 aa).

In terms of domain architecture, Core-binding (CB) spans 1–85 (MQQQLDAYCA…AVRGLYHYLN (85 aa)). One can recognise a Tyr recombinase domain in the interval 106–285 (RLPKTLDTDR…DFQHLAAVYD (180 aa)). Catalysis depends on residues arginine 146, lysine 170, histidine 237, arginine 240, and histidine 263. The active-site O-(3'-phospho-DNA)-tyrosine intermediate is tyrosine 272.

It belongs to the 'phage' integrase family. XerC subfamily. In terms of assembly, forms a cyclic heterotetrameric complex composed of two molecules of XerC and two molecules of XerD.

It localises to the cytoplasm. Site-specific tyrosine recombinase, which acts by catalyzing the cutting and rejoining of the recombining DNA molecules. The XerC-XerD complex is essential to convert dimers of the bacterial chromosome into monomers to permit their segregation at cell division. It also contributes to the segregational stability of plasmids. This is Tyrosine recombinase XerC from Pseudomonas fluorescens (strain ATCC BAA-477 / NRRL B-23932 / Pf-5).